The primary structure comprises 1077 residues: Adenylate cyclase type 4 (1077 aa).

Topologically, residues 1 to 28 (MARLFSPRPPPSEDLFYETYYSLSQQYP) are cytoplasmic. The next 6 helical transmembrane spans lie at 29 to 50 (LLLL…VAWA), 61 to 80 (FLTT…GLAS), 94 to 117 (GLVW…VSAW), 120 to 138 (VSYF…PLGM), 141 to 162 (AAVA…YLGP), and 170 to 190 (LLPQ…AGVY). At 191–585 (HKALMERALR…YRLSAIPAFK (395 aa)) the chain is on the cytoplasmic side. Residues aspartate 278, isoleucine 279, and aspartate 322 each contribute to the Mg(2+) site. ATP is bound by residues 278–283 (DIVGFT), 320–322 (LGD), and arginine 366. Serine 520 carries the post-translational modification Phosphoserine. A Phosphothreonine modification is found at threonine 536. 3 helical membrane-spanning segments follow: residues 586–607 (YYEA…LVTN), 611–633 (ALAI…CFSE), and 664–687 (IALG…FFPT). Residues 688–714 (SSDCPFQAPNVSSMISNLSWELPGSLP) lie on the Extracellular side of the membrane. Residues asparagine 697 and asparagine 704 are each glycosylated (N-linked (GlcNAc...) asparagine). 3 helical membrane-spanning segments follow: residues 715–736 (LISV…SLFL), 744–764 (LLLL…SHAW), and 791–807 (MGAI…LVLA). Over 808-1077 (RQNEYYCRLD…RTGPPSATLG (270 aa)) the chain is Cytoplasmic. ATP is bound by residues lysine 925, 1005–1007 (DIW), 1012–1016 (NVASR), and lysine 1052.

This sequence belongs to the adenylyl cyclase class-4/guanylyl cyclase family. The cofactor is Mg(2+). It depends on Mn(2+) as a cofactor. Detected in the zona glomerulosa and the zona fasciculata in the adrenal gland (at protein level).

It is found in the cell membrane. Its subcellular location is the cytoplasm. The catalysed reaction is ATP = 3',5'-cyclic AMP + diphosphate. With respect to regulation, activated by forskolin. Insensitive to calcium/calmodulin. Stimulated by GNAS and by the G-protein beta and gamma subunit complex. In terms of biological role, catalyzes the formation of the signaling molecule cAMP in response to G-protein signaling. This is Adenylate cyclase type 4 (ADCY4) from Homo sapiens (Human).